A 271-amino-acid polypeptide reads, in one-letter code: Bis(5'-nucleosyl)-tetraphosphatase, symmetrical (271 aa).

The protein belongs to the Ap4A hydrolase family.

The catalysed reaction is P(1),P(4)-bis(5'-adenosyl) tetraphosphate + H2O = 2 ADP + 2 H(+). In terms of biological role, hydrolyzes diadenosine 5',5'''-P1,P4-tetraphosphate to yield ADP. The chain is Bis(5'-nucleosyl)-tetraphosphatase, symmetrical from Aliivibrio fischeri (strain MJ11) (Vibrio fischeri).